The following is a 384-amino-acid chain: N-acetyldiaminopimelate deacetylase (384 aa).

D74 is an active-site residue. The Proton acceptor role is filled by E133.

The protein belongs to the peptidase M20A family. N-acetyldiaminopimelate deacetylase subfamily.

It catalyses the reaction N-acetyl-(2S,6S)-2,6-diaminopimelate + H2O = (2S,6S)-2,6-diaminopimelate + acetate. It functions in the pathway amino-acid biosynthesis; L-lysine biosynthesis via DAP pathway; LL-2,6-diaminopimelate from (S)-tetrahydrodipicolinate (acetylase route): step 3/3. Its function is as follows. Catalyzes the conversion of N-acetyl-diaminopimelate to diaminopimelate and acetate. The protein is N-acetyldiaminopimelate deacetylase of Leuconostoc mesenteroides subsp. mesenteroides (strain ATCC 8293 / DSM 20343 / BCRC 11652 / CCM 1803 / JCM 6124 / NCDO 523 / NBRC 100496 / NCIMB 8023 / NCTC 12954 / NRRL B-1118 / 37Y).